We begin with the raw amino-acid sequence, 273 residues long: 4-hydroxy-tetrahydrodipicolinate reductase (273 aa).

NAD(+)-binding positions include 12 to 17 and Glu-38; that span reads GAGGRM. Arg-39 contacts NADP(+). NAD(+)-binding positions include 102 to 104 and 126 to 129; these read GTT and AANF. The Proton donor/acceptor role is filled by His-159. Residue His-160 participates in (S)-2,3,4,5-tetrahydrodipicolinate binding. Lys-163 (proton donor) is an active-site residue. 169–170 contributes to the (S)-2,3,4,5-tetrahydrodipicolinate binding site; it reads GT.

It belongs to the DapB family. As to quaternary structure, homotetramer.

Its subcellular location is the cytoplasm. It catalyses the reaction (S)-2,3,4,5-tetrahydrodipicolinate + NAD(+) + H2O = (2S,4S)-4-hydroxy-2,3,4,5-tetrahydrodipicolinate + NADH + H(+). The catalysed reaction is (S)-2,3,4,5-tetrahydrodipicolinate + NADP(+) + H2O = (2S,4S)-4-hydroxy-2,3,4,5-tetrahydrodipicolinate + NADPH + H(+). It functions in the pathway amino-acid biosynthesis; L-lysine biosynthesis via DAP pathway; (S)-tetrahydrodipicolinate from L-aspartate: step 4/4. Catalyzes the conversion of 4-hydroxy-tetrahydrodipicolinate (HTPA) to tetrahydrodipicolinate. The polypeptide is 4-hydroxy-tetrahydrodipicolinate reductase (Salmonella gallinarum (strain 287/91 / NCTC 13346)).